The sequence spans 379 residues: Homoserine O-succinyltransferase (379 aa).

In terms of domain architecture, AB hydrolase-1 spans 51 to 360 (NAVLICHALS…DAPQGHDAFL (310 aa)). Serine 157 serves as the catalytic Nucleophile. Arginine 227 contacts substrate. Residues aspartate 323 and histidine 356 contribute to the active site. Aspartate 357 is a binding site for substrate.

This sequence belongs to the AB hydrolase superfamily. MetX family. In terms of assembly, homodimer.

It localises to the cytoplasm. It carries out the reaction L-homoserine + succinyl-CoA = O-succinyl-L-homoserine + CoA. It functions in the pathway amino-acid biosynthesis; L-methionine biosynthesis via de novo pathway; O-succinyl-L-homoserine from L-homoserine: step 1/1. Transfers a succinyl group from succinyl-CoA to L-homoserine, forming succinyl-L-homoserine. This Pseudomonas aeruginosa (strain LESB58) protein is Homoserine O-succinyltransferase.